The chain runs to 149 residues: 3-dehydroquinate dehydratase (149 aa).

Y26 acts as the Proton acceptor in catalysis. Substrate contacts are provided by N75, H81, and D88. Residue H101 is the Proton donor of the active site. Substrate-binding positions include L102 to S103 and R112.

It belongs to the type-II 3-dehydroquinase family. As to quaternary structure, homododecamer.

The catalysed reaction is 3-dehydroquinate = 3-dehydroshikimate + H2O. The protein operates within metabolic intermediate biosynthesis; chorismate biosynthesis; chorismate from D-erythrose 4-phosphate and phosphoenolpyruvate: step 3/7. Catalyzes a trans-dehydration via an enolate intermediate. This is 3-dehydroquinate dehydratase from Shewanella woodyi (strain ATCC 51908 / MS32).